The sequence spans 29 residues: Galanin (29 aa).

Ala-29 bears the Alanine amide mark.

The protein belongs to the galanin family.

The protein resides in the secreted. Its function is as follows. Contracts smooth muscle of the gastrointestinal and genitourinary tract, regulates growth hormone release, modulates insulin release, and may be involved in the control of adrenal secretion. The chain is Galanin (GAL) from Ovis aries (Sheep).